The chain runs to 432 residues: Transcobalamin-2 (432 aa).

The N-terminal stretch at 1-18 is a signal peptide; the sequence is MGHLGALLFLLGGLGALA. Cystine bridges form between Cys21/Cys270, Cys116/Cys312, and Cys165/Cys208. Asn94 is a glycosylation site (N-linked (GlcNAc...) asparagine). Cob(II)alamin is bound by residues Gln104, 152 to 156, His193, 193 to 197, Asn245, Ser248, Gln294, and 400 to 402; these read TSYYQ, HVSVD, and WQV.

Belongs to the eukaryotic cobalamin transport proteins family. Interacts with CD320 (via LDL-receptor class A domains). As to expression, expressed in mammary gland, kidney, lymphatic nodes and liver.

It localises to the secreted. Functionally, primary vitamin B12-binding and transport protein. Delivers cobalamin to cells. The chain is Transcobalamin-2 (TCN2) from Bos taurus (Bovine).